The primary structure comprises 405 residues: Deoxyguanosinetriphosphate triphosphohydrolase-like protein (405 aa).

Positions 75–219 constitute an HD domain; it reads RLTHTIEVAQ…AAIADDIAYN (145 aa).

It belongs to the dGTPase family. Type 2 subfamily.

The polypeptide is Deoxyguanosinetriphosphate triphosphohydrolase-like protein (Rhizobium etli (strain CIAT 652)).